The primary structure comprises 119 residues: Large ribosomal subunit protein uL18 (119 aa).

This sequence belongs to the universal ribosomal protein uL18 family. In terms of assembly, part of the 50S ribosomal subunit; part of the 5S rRNA/L5/L18/L25 subcomplex. Contacts the 5S and 23S rRNAs.

Its function is as follows. This is one of the proteins that bind and probably mediate the attachment of the 5S RNA into the large ribosomal subunit, where it forms part of the central protuberance. In Chlorobaculum tepidum (strain ATCC 49652 / DSM 12025 / NBRC 103806 / TLS) (Chlorobium tepidum), this protein is Large ribosomal subunit protein uL18.